The chain runs to 217 residues: Ribosome maturation factor RimM (217 aa).

Residues 115 to 186 (EDAWYDNQLV…TVTLTPPPGL (72 aa)) form the PRC barrel domain. Residues 181-217 (TPPPGLFEDLPDDAPAAGDESEPVSPPVTAEETPGGE) form a disordered region.

Belongs to the RimM family. As to quaternary structure, binds ribosomal protein uS19.

It localises to the cytoplasm. Its function is as follows. An accessory protein needed during the final step in the assembly of 30S ribosomal subunit, possibly for assembly of the head region. Essential for efficient processing of 16S rRNA. May be needed both before and after RbfA during the maturation of 16S rRNA. It has affinity for free ribosomal 30S subunits but not for 70S ribosomes. The protein is Ribosome maturation factor RimM of Leifsonia xyli subsp. xyli (strain CTCB07).